A 405-amino-acid chain; its full sequence is Phosphoglycerate kinase (405 aa).

Residues Asp-24–Asn-26, Arg-40, His-63–Arg-66, Arg-122, and Arg-162 each bind substrate. ATP is bound by residues Lys-212, Glu-331, and Gly-361–Ser-364.

The protein belongs to the phosphoglycerate kinase family. Monomer.

It is found in the cytoplasm. The catalysed reaction is (2R)-3-phosphoglycerate + ATP = (2R)-3-phospho-glyceroyl phosphate + ADP. It participates in carbohydrate degradation; glycolysis; pyruvate from D-glyceraldehyde 3-phosphate: step 2/5. The protein is Phosphoglycerate kinase of Corynebacterium efficiens (strain DSM 44549 / YS-314 / AJ 12310 / JCM 11189 / NBRC 100395).